A 337-amino-acid polypeptide reads, in one-letter code: Protein LEG1 homolog (337 aa).

Positions 1-20 (MAVLASWVWVLAGCFCAAVA) are cleaved as a signal peptide. Asn-171 is a glycosylation site (N-linked (GlcNAc...) asparagine).

This sequence belongs to the LEG1 family.

It is found in the secreted. Functionally, may be involved in early liver development. The polypeptide is Protein LEG1 homolog (Mus musculus (Mouse)).